The chain runs to 488 residues: Altronate oxidoreductase (488 aa).

Residue 18 to 29 (VIQFGEGNFLRA) participates in NAD(+) binding.

It belongs to the mannitol dehydrogenase family. UxaB subfamily.

The enzyme catalyses D-altronate + NAD(+) = keto-D-tagaturonate + NADH + H(+). It functions in the pathway carbohydrate metabolism; pentose and glucuronate interconversion. The protein is Altronate oxidoreductase of Pectobacterium atrosepticum (strain SCRI 1043 / ATCC BAA-672) (Erwinia carotovora subsp. atroseptica).